Consider the following 192-residue polypeptide: Peptidyl-tRNA hydrolase (192 aa).

Tyr-18 contributes to the tRNA binding site. His-23 (proton acceptor) is an active-site residue. Positions 69, 71, and 117 each coordinate tRNA.

This sequence belongs to the PTH family. Monomer.

It is found in the cytoplasm. It catalyses the reaction an N-acyl-L-alpha-aminoacyl-tRNA + H2O = an N-acyl-L-amino acid + a tRNA + H(+). Functionally, hydrolyzes ribosome-free peptidyl-tRNAs (with 1 or more amino acids incorporated), which drop off the ribosome during protein synthesis, or as a result of ribosome stalling. Catalyzes the release of premature peptidyl moieties from peptidyl-tRNA molecules trapped in stalled 50S ribosomal subunits, and thus maintains levels of free tRNAs and 50S ribosomes. The polypeptide is Peptidyl-tRNA hydrolase (Neisseria meningitidis serogroup C (strain 053442)).